A 228-amino-acid polypeptide reads, in one-letter code: Putative NAC domain-containing protein 61 (228 aa).

Residues 5–156 (LSVGFRFYPT…KSGSSRAFDR (152 aa)) form the NAC domain. Disordered stretches follow at residues 77-96 (ARGG…ATGS) and 166-197 (RNLP…QVDL). Low complexity predominate over residues 80–89 (GRPSRTTGSG). The span at 168 to 193 (LPSNGVETSSRATISTSPETSHSGGN) shows a compositional bias: polar residues.

It is found in the nucleus. The chain is Putative NAC domain-containing protein 61 (NAC061) from Arabidopsis thaliana (Mouse-ear cress).